We begin with the raw amino-acid sequence, 377 residues long: MSSPDGGYGSDDQNQGKCSVPIMMSGLGQCQWSEPMTSLGEGKLKSDANSRSKAEGRIRRPMNAFMVWAKDERKRLAQQNPDLHNAELSKMLGKSWKALSLAEKRPFVEEAERLRVQHMQDHPNYKYRPRRRKQVKRMKRAENGFMHMTEAQESAVMGTDGRMCLENFNLGFHEQTYPQLPQASHYREPQAMAPHYDGYSLPTPESSPLDLAEADPVFFTSPAQDECQMMPYSYNSSYTHQHNSGASMLVRQMPQTEQIGEGSPVEGMMACQSSPHMYYGQMYLPGSTRHHQHPQAGQPSPPPEAQQLGRADQTQQADMMAEDRTEFEQYLSYVSKSDLGMNYHGQESVGPTADNGPISSVLSDATTAVYYCNYPSA.

2 disordered regions span residues 1-20 (MSSP…KCSV) and 31-57 (QWSE…AEGR). Residues 42–57 (GKLKSDANSRSKAEGR) are compositionally biased toward basic and acidic residues. Residues 58-126 (IRRPMNAFMV…QHMQDHPNYK (69 aa)) constitute a DNA-binding region (HMG box). Residues 262-376 (GSPVEGMMAC…TAVYYCNYPS (115 aa)) form the Sox C-terminal domain. The interval 282 to 321 (MYLPGSTRHHQHPQAGQPSPPPEAQQLGRADQTQQADMMA) is disordered. Positions 325-333 (TEFEQYLSY) match the 9aaTAD motif. Residues 326 to 331 (EFEQYL) are required for transcriptional activity and interaction with ctnnb1.

Interacts (via C-terminus) with ctnnb1/beta-catenin (via Armadillo repeats); this interaction is required for inhibition of wnt-signaling. Enriched in the embryonic endoderm. Expressed in the embryonic gut, with strong expression in the posterior gut during tailbud stages. Expressed at a low level in the adult kidney and spleen.

The protein localises to the nucleus. In terms of biological role, transcription activator. Binds to the DNA sequence 5'-AACAAT-3'. All of the sox17 proteins are required for embryonic endoderm development and gastrulation movements, and show some redundancy in function. In addition, the sox17 proteins have distinct but overlapping roles in later gut development. Acts downstream of vegt-signaling in endoderm differentiation to induce a range of endodermal genes both directly (including endodermin and dhh/chh) and indirectly. Also represses wnt-responsive genes to inhibit wnt/beta-catenin signaling. This Xenopus laevis (African clawed frog) protein is Transcription factor Sox-17-alpha-B (sox17a-b).